Here is a 293-residue protein sequence, read N- to C-terminus: 1D-myo-inositol 2-acetamido-2-deoxy-alpha-D-glucopyranoside deacetylase (293 aa).

Zn(2+)-binding residues include His-16, Asp-19, and His-156.

Belongs to the MshB deacetylase family. Zn(2+) serves as cofactor.

It catalyses the reaction 1D-myo-inositol 2-acetamido-2-deoxy-alpha-D-glucopyranoside + H2O = 1D-myo-inositol 2-amino-2-deoxy-alpha-D-glucopyranoside + acetate. In terms of biological role, catalyzes the deacetylation of 1D-myo-inositol 2-acetamido-2-deoxy-alpha-D-glucopyranoside (GlcNAc-Ins) in the mycothiol biosynthesis pathway. The polypeptide is 1D-myo-inositol 2-acetamido-2-deoxy-alpha-D-glucopyranoside deacetylase (Nakamurella multipartita (strain ATCC 700099 / DSM 44233 / CIP 104796 / JCM 9543 / NBRC 105858 / Y-104) (Microsphaera multipartita)).